A 989-amino-acid polypeptide reads, in one-letter code: Serine-repeat antigen protein 5 (989 aa).

The first 16 residues, 1–16 (MKSYISLFFILCVIFN), serve as a signal peptide directing secretion. Disordered regions lie at residues 26-91 (SQTG…EKQD) and 165-245 (LPSN…RNLQ). 3 stretches are compositionally biased toward low complexity: residues 52–87 (QGST…STSS), 167–180 (SNGT…STGT), and 191–225 (SSSS…SSSS). Phosphoserine is present on Ser-167. Residue Asn-168 is glycosylated (N-linked (GlcNAc...) asparagine). An interaction with PTKL region spans residues 208 to 245 (SSSSSSSSSSSSSSSSSSESLPANGPDSPTVKPPRNLQ). Asn-310 carries N-linked (GlcNAc...) asparagine glycosylation. The tract at residues 365 to 382 (YKYLSEDIVSNFKEIKAE) is interaction with host VTN. Cys-437 and Cys-489 are joined by a disulfide. Phosphothreonine is present on Thr-541. 5 disulfides stabilise this stretch: Cys-559–Cys-564, Cys-573–Cys-602, Cys-585–Cys-628, Cys-619–Cys-664, and Cys-747–Cys-801. The tract at residues 571 to 989 (NNCISNLQVE…TNNECYFCYV (419 aa)) is thiol-protease-like. Residues His-754 and Asn-779 contribute to the active site. An N-linked (GlcNAc...) asparagine glycan is attached at Asn-820. Positions 835–878 (KASPEFYHNLYFKNFNVGKKNLFSEKEDNENNKKLGNNYIIFGQ) are cleaved as a propeptide — inhibition peptide. At Ser-858 the chain carries Phosphoserine.

The protein belongs to the peptidase C1 family. May interact (via C-terminus) with PTKL (via SAM domain). In terms of assembly, interacts (via C-terminus) with human VTN (via hemopexin repeat 2); may form heterotetramers of two VTN and SERA5 P47 heterodimers; the interaction may protect merozoites from phagocytosis by host monocytes; VTN glycosylation appears to be dispensable for the interaction. As to quaternary structure, monomer. Interacts with kinase CPK1/CDPK1 at the schizont stage. Phosphorylation by CPK1/CDPK1 increases SERA5 protease activity towards a synthetic peptide in vitro. In terms of processing, just prior to merozoite egress from host erythrocytes, proteolytically cleaved into multiple fragments. Cleaved by SUB1 into p47 and p73, p73 is further cleaved by SUB1 into p56 and p18 and p56 is further processed into p50 by an unidentified protease. p47 remains covalently associated with p18 via disulfide bond. p47 can be processed into p25n and p25c by SUB1. p25c and p25n remain associated with p18. Proteolytic processing is essential for merozoite egress from host erythrocytes. The cleavage of the propeptide to produce p50 is necessary for protease activity and to promote merozoite egress.

Its subcellular location is the parasitophorous vacuole. The protein resides in the secreted. It localises to the cell membrane. Its function is as follows. Plays an essential role during the asexual blood stage development by controlling the kinetics of merozoite egress from host erythrocytes. Specifically, prevents premature rupture of the parasitophorous vacuole and host erythrocyte membranes. May prevent merozoite phagocytosis by host monocytes via interaction with host VTN at the merozoite surface. Plays a role in parasite growth. Functionally, protease activity is controversial. The polypeptide is Serine-repeat antigen protein 5 (Plasmodium falciparum (isolate CDC / Honduras)).